A 119-amino-acid polypeptide reads, in one-letter code: Holo-[acyl-carrier-protein] synthase (119 aa).

The Mg(2+) site is built by aspartate 8 and glutamate 58.

The protein belongs to the P-Pant transferase superfamily. AcpS family. Mg(2+) is required as a cofactor.

Its subcellular location is the cytoplasm. It carries out the reaction apo-[ACP] + CoA = holo-[ACP] + adenosine 3',5'-bisphosphate + H(+). Functionally, transfers the 4'-phosphopantetheine moiety from coenzyme A to a Ser of acyl-carrier-protein. In Bacillus cereus (strain G9842), this protein is Holo-[acyl-carrier-protein] synthase.